A 249-amino-acid chain; its full sequence is DNA polymerase sliding clamp 1 (249 aa).

Belongs to the PCNA family. As to quaternary structure, forms heterodimers with PCNA2, which then recruit PCNA3; does not form homotrimers. The heterodimers interact with RfcS homotetramers. Heterotrimer which circularizes head-to-tail (head is at N-terminus, tail is at C-terminus) to form a toroid; DNA passes through its center. Replication factor C (RFC) is required to load the toroid on the DNA. Heterotrimer interacts, probably via this subunit, with flap endonuclease 1 (fen), Hjc, Dpo4, and XPF.

Its function is as follows. One of the sliding clamp subunits that acts as a moving platform for DNA processing. Responsible for tethering the catalytic subunit of DNA polymerase to DNA during high-speed replication. Heterotrimer stimulates the Holliday junction resolvase Hjc. DNA polymerase I, DNA ligase and the flap endonuclease may be constitutively associated with the PCNA heterotrimer forming a scanning complex able to couple DNA synthesis and Okazaki fragment maturation. The protein is DNA polymerase sliding clamp 1 of Saccharolobus solfataricus (strain ATCC 35092 / DSM 1617 / JCM 11322 / P2) (Sulfolobus solfataricus).